Consider the following 593-residue polypeptide: MPRTLSLHEITDLLETDDSIEASAIVIQPPENATAPVSDEESGDEEGGTINNLPGSLLHTAAYLIQDGSDAESDSDDPSYAPKDDSPDEVPSTFTVQQPPPSRRRKMTKILCKWKKADLTVQPVAGRVTAPPNDFFTVMRTPTEILELFLDDEVIELIVKYSNLYACSKGVHLGLTSSEFKCFLGIIFLSGYVSVPRRRMFWEQRTDVHNVLVSAAMRRDRFETIFSNLHVADNANLDPVDKFSKLRPLISKLNERCMKFVPNETYFSFDEFMVPYFGRHGCKQFIRGKPIRFGYKFWCGATCLGYICWFQPYQGKNPNTKHEEYGVGASLVLQFSEALTEAHPGQYHFVFNNFFTSIALLDKLSSMGHQATGTVRKDHIDRVPLESDVALKKKERGTFDYRIDGKGNIVCRWNDNSVVTVASSGAGIHPLCLVSRYSQKLKKKIQVQQPNMIKVYNQFMGGVDRADENIDKYRASIRGKKWYSSPLLFCFELVLQNAWQLHKTYDEKPVDFLEFRRRVVCHYLETHGHPPEPGQKGRPQKRNIDSRYDGINHVIVKQGKQTRCAECHKNTTFRCEKCDVALHVKCSVEYHTE.

Disordered regions lie at residues 27–53 (IQPPENATAPVSDEESGDEEGGTINNL) and 69–105 (SDAESDSDDPSYAPKDDSPDEVPSTFTVQQPPPSRRR). Acidic residues predominate over residues 38–47 (SDEESGDEEG). Serine 86 is modified (phosphoserine).

In terms of tissue distribution, expressed in heart and oocytes, but not in granulosa cells (at protein level).

It is found in the nucleus. Its function is as follows. Binds in vitro to PGBD3-related transposable elements, called MER85s; these non-autonomous 140 bp elements are characterized by the presence of PGBD3 terminal inverted repeats and the absence of internal transposase ORF. The chain is PiggyBac transposable element-derived protein 3 (PGBD3) from Homo sapiens (Human).